We begin with the raw amino-acid sequence, 203 residues long: LexA repressor (203 aa).

Residues 28–47 (IREIGDEFGITAKGAYDHLK) constitute a DNA-binding region (H-T-H motif). Residues S127 and K164 each act as for autocatalytic cleavage activity in the active site.

Belongs to the peptidase S24 family. As to quaternary structure, homodimer.

The enzyme catalyses Hydrolysis of Ala-|-Gly bond in repressor LexA.. Functionally, represses a number of genes involved in the response to DNA damage (SOS response), including recA and lexA. In the presence of single-stranded DNA, RecA interacts with LexA causing an autocatalytic cleavage which disrupts the DNA-binding part of LexA, leading to derepression of the SOS regulon and eventually DNA repair. The sequence is that of LexA repressor from Leptospira interrogans serogroup Icterohaemorrhagiae serovar copenhageni (strain Fiocruz L1-130).